We begin with the raw amino-acid sequence, 93 residues long: NADH-ubiquinone oxidoreductase chain 4L (93 aa).

3 helical membrane passes run 2-22 (ALYEMNLSVILFLIGILGFVL), 27-47 (IILMLISIEVMLLAVTLLVLV), and 62-82 (IYIIAIAGAESAIGLGILVAY).

This sequence belongs to the complex I subunit 4L family.

The protein resides in the mitochondrion inner membrane. The enzyme catalyses a ubiquinone + NADH + 5 H(+)(in) = a ubiquinol + NAD(+) + 4 H(+)(out). Functionally, core subunit of the mitochondrial membrane respiratory chain NADH dehydrogenase (Complex I) that is believed to belong to the minimal assembly required for catalysis. Complex I functions in the transfer of electrons from NADH to the respiratory chain. The immediate electron acceptor for the enzyme is believed to be ubiquinone. In Mycosarcoma maydis (Corn smut fungus), this protein is NADH-ubiquinone oxidoreductase chain 4L (ND4L).